Reading from the N-terminus, the 176-residue chain is Peptide deformylase 1 (176 aa).

C99 and H141 together coordinate Fe cation. E142 is an active-site residue. H145 contacts Fe cation.

It belongs to the polypeptide deformylase family. Fe(2+) serves as cofactor.

It catalyses the reaction N-terminal N-formyl-L-methionyl-[peptide] + H2O = N-terminal L-methionyl-[peptide] + formate. Its function is as follows. Removes the formyl group from the N-terminal Met of newly synthesized proteins. Requires at least a dipeptide for an efficient rate of reaction. N-terminal L-methionine is a prerequisite for activity but the enzyme has broad specificity at other positions. The protein is Peptide deformylase 1 of Nitrosomonas europaea (strain ATCC 19718 / CIP 103999 / KCTC 2705 / NBRC 14298).